Consider the following 145-residue polypeptide: Hemoglobin fetal subunit beta (145 aa).

Positions 1-145 (MLSAEEKASV…VANALAHRYH (145 aa)) constitute a Globin domain. Positions 62 and 91 each coordinate heme b.

Belongs to the globin family. Heterotetramer of two alpha chains and two beta chains. As to expression, red blood cells.

In terms of biological role, involved in oxygen transport from the lung to the various peripheral tissues. The chain is Hemoglobin fetal subunit beta from Capra hircus (Goat).